The chain runs to 901 residues: Protein translocase subunit SecA (901 aa).

Residues Gln-87, 105 to 109, and Asp-512 contribute to the ATP site; that span reads GEGKT. Positions 885, 887, 896, and 897 each coordinate Zn(2+).

Belongs to the SecA family. As to quaternary structure, monomer and homodimer. Part of the essential Sec protein translocation apparatus which comprises SecA, SecYEG and auxiliary proteins SecDF-YajC and YidC. Zn(2+) is required as a cofactor.

Its subcellular location is the cell inner membrane. It localises to the cytoplasm. The catalysed reaction is ATP + H2O + cellular proteinSide 1 = ADP + phosphate + cellular proteinSide 2.. Part of the Sec protein translocase complex. Interacts with the SecYEG preprotein conducting channel. Has a central role in coupling the hydrolysis of ATP to the transfer of proteins into and across the cell membrane, serving both as a receptor for the preprotein-SecB complex and as an ATP-driven molecular motor driving the stepwise translocation of polypeptide chains across the membrane. The protein is Protein translocase subunit SecA of Salmonella arizonae (strain ATCC BAA-731 / CDC346-86 / RSK2980).